The following is a 408-amino-acid chain: Gustatory receptor 10a (408 aa).

Over 1 to 20 (MTSPDERKSFWERHEFKFYR) the chain is Cytoplasmic. A helical transmembrane segment spans residues 21-38 (YGHVYALIYGQVVIDYVP). Topologically, residues 39-48 (QRALKRGVKV) are extracellular. The chain crosses the membrane as a helical span at residues 49–69 (LLIAYGHLFSMLLIVVLPGYF). Topologically, residues 70-86 (CYHFRTLTDTLDRRLQL) are cytoplasmic. Residues 87–107 (LFYVSFTNTAIKYATVIVTYV) form a helical membrane-spanning segment. Residues 108–144 (ANTVHFEAINQRCTMQRTHLEFEFKNAPQEPKRPFEF) are Extracellular-facing. A helical transmembrane segment spans residues 145–165 (FMYFKFCLINLMMMIQVCGIF). At 166–270 (AQYGEVGKGS…RESFRMHQFQ (105 aa)) the chain is on the cytoplasmic side. A helical transmembrane segment spans residues 271–291 (LIGLMLSTLINNLTNFYTLFH). Topologically, residues 292 to 304 (MLAKQSLEEVSYP) are extracellular. A helical membrane pass occupies residues 305-325 (VVVGSVYATGFYIDTYIVALI). Topologically, residues 326-381 (NEHIKLELEAVALTMRRFAEPREMDERLTREIEHLSLELLNYQPPMLCGLLHLDRR) are cytoplasmic. A helical membrane pass occupies residues 382 to 402 (LVYLIAVTAFSYFITLVQFDL). The Extracellular segment spans residues 403 to 408 (YLRKKS).

Belongs to the insect chemoreceptor superfamily. Gustatory receptor (GR) family. Gr10a subfamily. Expressed in the medial aspect of the third antennal segment, and in neurons of the terminal external chemosensory organ of larvae.

It is found in the cell membrane. In terms of biological role, probable gustatory receptor which mediates acceptance or avoidance behavior, depending on its substrates. In Drosophila melanogaster (Fruit fly), this protein is Gustatory receptor 10a (Gr10a).